Consider the following 972-residue polypeptide: FHF complex subunit HOOK-interacting protein 1B (972 aa).

Disordered regions lie at residues 465–496 (APSP…VPRP), 510–547 (SLSG…AGEL), 573–642 (SAPY…PGSW), and 710–733 (SFTC…NQLP). A Phosphoserine modification is found at Ser-467. The span at 479–490 (GPGSPSVDSSSV) shows a compositional bias: low complexity. A phosphoserine mark is found at Ser-510, Ser-523, Ser-529, and Ser-533. Residues 523–535 (SPGLSASPASSPG) show a composition bias toward low complexity. Positions 618–627 (GLAGGAGEGP) are enriched in gly residues. A phosphoserine mark is found at Ser-859 and Ser-897.

The protein belongs to the FHIP family. In terms of assembly, component of the FTS/Hook/FHIP complex (FHF complex), composed of AKTIP/FTS, FHIP1B, and one or more members of the Hook family of proteins HOOK1, HOOK2, and HOOK3. The FHF complex associates with the homotypic vesicular sorting complex (the HOPS complex).

Component of the FTS/Hook/FHIP complex (FHF complex). The FHF complex may function to promote vesicle trafficking and/or fusion via the homotypic vesicular protein sorting complex (the HOPS complex). FHF complex promotes the distribution of AP-4 complex to the perinuclear area of the cell. This is FHF complex subunit HOOK-interacting protein 1B (FHIP1B) from Pongo abelii (Sumatran orangutan).